We begin with the raw amino-acid sequence, 477 residues long: Succinate-semialdehyde dehydrogenase [NADP(+)] (477 aa).

NADP(+)-binding positions include 142 to 143 (WN), 166 to 169 (KHSE), and 218 to 219 (GS). The active-site Proton acceptor is glutamate 240. NADP(+) is bound at residue leucine 241. Cysteine 274 (nucleophile) is an active-site residue. Glutamate 371 is an NADP(+) binding site.

The protein belongs to the aldehyde dehydrogenase family.

It carries out the reaction succinate semialdehyde + NADP(+) + H2O = succinate + NADPH + 2 H(+). The protein operates within amino-acid degradation; 4-aminobutanoate degradation. Functionally, catalyzes the NADP(+) dependent oxidation of succinate semialdehyde to succinate. This Deinococcus radiodurans (strain ATCC 13939 / DSM 20539 / JCM 16871 / CCUG 27074 / LMG 4051 / NBRC 15346 / NCIMB 9279 / VKM B-1422 / R1) protein is Succinate-semialdehyde dehydrogenase [NADP(+)] (ssdA).